Here is a 261-residue protein sequence, read N- to C-terminus: Glucosamine-6-phosphate deaminase (261 aa).

Catalysis depends on Asp-67, which acts as the Proton acceptor; for enolization step. The For ring-opening step role is filled by Asp-136. His-138 (proton acceptor; for ring-opening step) is an active-site residue. Glu-143 serves as the catalytic For ring-opening step.

The protein belongs to the glucosamine/galactosamine-6-phosphate isomerase family. NagB subfamily.

It catalyses the reaction alpha-D-glucosamine 6-phosphate + H2O = beta-D-fructose 6-phosphate + NH4(+). It functions in the pathway amino-sugar metabolism; N-acetylneuraminate degradation; D-fructose 6-phosphate from N-acetylneuraminate: step 5/5. Its function is as follows. Catalyzes the reversible isomerization-deamination of glucosamine 6-phosphate (GlcN6P) to form fructose 6-phosphate (Fru6P) and ammonium ion. In Beutenbergia cavernae (strain ATCC BAA-8 / DSM 12333 / CCUG 43141 / JCM 11478 / NBRC 16432 / NCIMB 13614 / HKI 0122), this protein is Glucosamine-6-phosphate deaminase.